The following is a 561-amino-acid chain: Putative transport protein YbjL (561 aa).

A run of 5 helical transmembrane segments spans residues 8 to 28 (LLNG…LCLG), 32 to 52 (LGSI…LLGQ), 66 to 86 (FMLF…SIFF), 94 to 114 (MLAL…GKLF), and 158 to 178 (NLSL…IVGA). RCK C-terminal domains follow at residues 202-288 (LDTD…SFRN) and 292-373 (VFDR…RIGF). The next 5 membrane-spanning stretches (helical) occupy residues 383–403 (LLAF…TFQF), 406–426 (FSFG…LGFM), 451–471 (VFMA…LGAI), 475–495 (MLVA…LFGA), and 540–560 (AIAN…WPGL).

It belongs to the AAE transporter (TC 2.A.81) family. YbjL subfamily.

It localises to the cell membrane. This is Putative transport protein YbjL from Escherichia fergusonii (strain ATCC 35469 / DSM 13698 / CCUG 18766 / IAM 14443 / JCM 21226 / LMG 7866 / NBRC 102419 / NCTC 12128 / CDC 0568-73).